Consider the following 762-residue polypeptide: Hyperosmolality-gated Ca2+ permeable channel 2.2 (762 aa).

A run of 10 helical transmembrane segments spans residues V3–L23, M90–L110, L144–F164, I354–V374, V402–L422, K445–I465, G500–A520, V557–Y577, Q594–A614, and L615–L635.

It belongs to the CSC1 (TC 1.A.17) family.

It localises to the membrane. In terms of biological role, acts as an osmosensitive calcium-permeable cation channel. This chain is Hyperosmolality-gated Ca2+ permeable channel 2.2, found in Arabidopsis thaliana (Mouse-ear cress).